The primary structure comprises 150 residues: Snaclec 7 (150 aa).

A signal peptide spans Met1 to Ala23. 3 disulfide bridges follow: Cys27/Cys38, Cys55/Cys144, and Cys121/Cys136. A C-type lectin domain is found at Tyr34 to Lys145.

Belongs to the snaclec family. Heterodimer; disulfide-linked.

It localises to the secreted. Interferes with one step of hemostasis (modulation of platelet aggregation, or coagulation cascade, for example). This Daboia siamensis (Eastern Russel's viper) protein is Snaclec 7.